The sequence spans 309 residues: Acetylglutamate kinase (309 aa).

Residues 82-83 (GG), Arg-104, and Asn-206 each bind substrate.

The protein belongs to the acetylglutamate kinase family. ArgB subfamily.

It localises to the cytoplasm. The catalysed reaction is N-acetyl-L-glutamate + ATP = N-acetyl-L-glutamyl 5-phosphate + ADP. The protein operates within amino-acid biosynthesis; L-arginine biosynthesis; N(2)-acetyl-L-ornithine from L-glutamate: step 2/4. Functionally, catalyzes the ATP-dependent phosphorylation of N-acetyl-L-glutamate. The protein is Acetylglutamate kinase of Cupriavidus metallidurans (strain ATCC 43123 / DSM 2839 / NBRC 102507 / CH34) (Ralstonia metallidurans).